A 92-amino-acid polypeptide reads, in one-letter code: MSDNYNYPLDINWSTDEITSVLHFLNQVEKAYESKVDANQLLESYRVFKEIVTSKSQEKQIDREFEKSSGYSTYRAVQKAKEVEKGYFSLGR.

The protein belongs to the UPF0223 family.

The polypeptide is UPF0223 protein SUB0967 (Streptococcus uberis (strain ATCC BAA-854 / 0140J)).